Reading from the N-terminus, the 247-residue chain is 5'-nucleotidase SurE (247 aa).

The a divalent metal cation site is built by aspartate 8, aspartate 9, serine 39, and asparagine 91.

Belongs to the SurE nucleotidase family. The cofactor is a divalent metal cation.

It is found in the cytoplasm. It catalyses the reaction a ribonucleoside 5'-phosphate + H2O = a ribonucleoside + phosphate. Functionally, nucleotidase that shows phosphatase activity on nucleoside 5'-monophosphates. The protein is 5'-nucleotidase SurE of Nitrosomonas eutropha (strain DSM 101675 / C91 / Nm57).